A 198-amino-acid chain; its full sequence is Ribonuclease 3-like protein 1 (198 aa).

The span at 85 to 110 (KKLAPKPDEEHTTTTKPISKDDESKT) shows a compositional bias: basic and acidic residues. A disordered region spans residues 85–115 (KKLAPKPDEEHTTTTKPISKDDESKTRRGSA). Positions 114 to 191 (SAKSVLHEMC…AEGALWYLEH (78 aa)) constitute a DRBM domain.

This Arabidopsis thaliana (Mouse-ear cress) protein is Ribonuclease 3-like protein 1 (RTL1).